A 131-amino-acid polypeptide reads, in one-letter code: Hypocretin neuropeptide precursor (131 aa).

An N-terminal signal peptide occupies residues 1–33 (MNLPSTKVSWAAVTLLLLLLLLPPALLSSGAAA). Gln34 carries the post-translational modification Pyrrolidone carboxylic acid. Intrachain disulfides connect Cys39–Cys45 and Cys40–Cys47. Leu66 carries the post-translational modification Leucine amide. Residue Met97 is modified to Methionine amide. A propeptide spans 98-131 (GRRAGAEPAPRPCLGRRCSAPAAASVAPGGQSGI) (removed in mature form).

The protein belongs to the orexin family. In terms of processing, specific enzymatic cleavages at paired basic residues yield the different active peptides. In terms of tissue distribution, abundantly expressed in subthalamic nucleus but undetectable in other brain regions tested (hypothalamus was not tested) and in heart, placenta, lung, liver, skeletal muscle, kidney and pancreas.

The protein localises to the rough endoplasmic reticulum. The protein resides in the cytoplasmic vesicle. Its subcellular location is the synapse. In terms of biological role, neuropeptides that play a significant role in the regulation of food intake and sleep-wakefulness, possibly by coordinating the complex behavioral and physiologic responses of these complementary homeostatic functions. A broader role in the homeostatic regulation of energy metabolism, autonomic function, hormonal balance and the regulation of body fluids, is also suggested. Binds to orexin receptors HCRTR1/OX1R and HCRTR2/OX2R with a high affinity. Stimulates food intake. Modulates pituitary luteinizing hormone secretion in an ovarian steroid-dependent manner. Its function is as follows. Binds to orexin receptor HCRTR2/OX2R only. Stimulates food intake. Modulates pituitary luteinizing hormone secretion in an ovarian steroid-dependent manner. This Homo sapiens (Human) protein is Hypocretin neuropeptide precursor.